Here is a 495-residue protein sequence, read N- to C-terminus: Aspartyl/glutamyl-tRNA(Asn/Gln) amidotransferase subunit B (495 aa).

Belongs to the GatB/GatE family. GatB subfamily. Heterotrimer of A, B and C subunits.

It catalyses the reaction L-glutamyl-tRNA(Gln) + L-glutamine + ATP + H2O = L-glutaminyl-tRNA(Gln) + L-glutamate + ADP + phosphate + H(+). It carries out the reaction L-aspartyl-tRNA(Asn) + L-glutamine + ATP + H2O = L-asparaginyl-tRNA(Asn) + L-glutamate + ADP + phosphate + 2 H(+). Its function is as follows. Allows the formation of correctly charged Asn-tRNA(Asn) or Gln-tRNA(Gln) through the transamidation of misacylated Asp-tRNA(Asn) or Glu-tRNA(Gln) in organisms which lack either or both of asparaginyl-tRNA or glutaminyl-tRNA synthetases. The reaction takes place in the presence of glutamine and ATP through an activated phospho-Asp-tRNA(Asn) or phospho-Glu-tRNA(Gln). This Methanosarcina barkeri (strain Fusaro / DSM 804) protein is Aspartyl/glutamyl-tRNA(Asn/Gln) amidotransferase subunit B.